A 213-amino-acid chain; its full sequence is Chloramphenicol acetyltransferase 3 (213 aa).

H189 functions as the Proton acceptor in the catalytic mechanism.

It belongs to the chloramphenicol acetyltransferase family. In terms of assembly, homotrimer.

The enzyme catalyses chloramphenicol + acetyl-CoA = chloramphenicol 3-acetate + CoA. This enzyme is an effector of chloramphenicol resistance in bacteria. The sequence is that of Chloramphenicol acetyltransferase 3 (cat3) from Escherichia coli.